A 187-amino-acid chain; its full sequence is Ribose 1,5-bisphosphate phosphokinase PhnN (187 aa).

Residue 9-16 (GPSGSGKD) coordinates ATP.

This sequence belongs to the ribose 1,5-bisphosphokinase family.

It carries out the reaction alpha-D-ribose 1,5-bisphosphate + ATP = 5-phospho-alpha-D-ribose 1-diphosphate + ADP. It functions in the pathway metabolic intermediate biosynthesis; 5-phospho-alpha-D-ribose 1-diphosphate biosynthesis; 5-phospho-alpha-D-ribose 1-diphosphate from D-ribose 5-phosphate (route II): step 3/3. Catalyzes the phosphorylation of ribose 1,5-bisphosphate to 5-phospho-D-ribosyl alpha-1-diphosphate (PRPP). This Desulfomicrobium baculatum (strain DSM 4028 / VKM B-1378 / X) (Desulfovibrio baculatus) protein is Ribose 1,5-bisphosphate phosphokinase PhnN.